Reading from the N-terminus, the 141-residue chain is Cytochrome c-type biogenesis protein CcmE (141 aa).

The Cytoplasmic segment spans residues 1-7 (MQRKHKR). A helical; Signal-anchor for type II membrane protein membrane pass occupies residues 8 to 28 (ILFVAVSFIALGCVSAFVLFE). The Periplasmic portion of the chain corresponds to 29 to 141 (LSKSISFFCT…SSDAAVIGSS (113 aa)). Heme-binding residues include histidine 121 and tyrosine 125.

It belongs to the CcmE/CycJ family.

The protein localises to the cell inner membrane. Functionally, heme chaperone required for the biogenesis of c-type cytochromes. Transiently binds heme delivered by CcmC and transfers the heme to apo-cytochromes in a process facilitated by CcmF and CcmH. This is Cytochrome c-type biogenesis protein CcmE from Anaplasma phagocytophilum (strain HZ).